Reading from the N-terminus, the 212-residue chain is Peptide methionine sulfoxide reductase MsrA (212 aa).

Cys52 is an active-site residue.

This sequence belongs to the MsrA Met sulfoxide reductase family.

It carries out the reaction L-methionyl-[protein] + [thioredoxin]-disulfide + H2O = L-methionyl-(S)-S-oxide-[protein] + [thioredoxin]-dithiol. The enzyme catalyses [thioredoxin]-disulfide + L-methionine + H2O = L-methionine (S)-S-oxide + [thioredoxin]-dithiol. Its function is as follows. Has an important function as a repair enzyme for proteins that have been inactivated by oxidation. Catalyzes the reversible oxidation-reduction of methionine sulfoxide in proteins to methionine. In Salmonella arizonae (strain ATCC BAA-731 / CDC346-86 / RSK2980), this protein is Peptide methionine sulfoxide reductase MsrA.